The chain runs to 177 residues: CASP-like protein 2U1 (177 aa).

A helical membrane pass occupies residues 1-21; sequence MVLRIVASLLSIAALVLMAKD. Residues 22–48 are Cytoplasmic-facing; it reads KQVVYLNLAGEELTLEAKHSYVEAFVY. The chain crosses the membrane as a helical span at residues 49 to 69; it reads LVYSNGLVAIYCFLLVFALVF. The Extracellular portion of the chain corresponds to 70 to 80; it reads RLIDKAGCGKS. Residues 81–101 form a helical membrane-spanning segment; sequence AAWIIFLLDQGLAYVLLAAAA. The Cytoplasmic segment spans residues 102-131; sequence ASTEVAYVAKRGNNKVGWSEVCSTFGHFCN. Residues 132 to 152 form a helical membrane-spanning segment; the sequence is LVGVSIVITFISVLAMATLSV. Over 153-177 the chain is Extracellular; the sequence is MSARRLFKTYGPERKQISSNDAPAI.

The protein belongs to the Casparian strip membrane proteins (CASP) family. In terms of assembly, homodimer and heterodimers.

The protein resides in the cell membrane. The protein is CASP-like protein 2U1 of Osmunda lancea (Fern).